A 114-amino-acid polypeptide reads, in one-letter code: Hemerythrin subunit 2 (114 aa).

Histidine 26, histidine 55, glutamate 59, histidine 74, histidine 78, histidine 102, and aspartate 107 together coordinate Fe cation.

Belongs to the hemerythrin family.

Functionally, hemerythrin is a respiratory protein in blood cells of certain marine worms. The oxygen-binding site in each chain contains two iron atoms. This Golfingia vulgaris (Marine worm) protein is Hemerythrin subunit 2.